The primary structure comprises 2273 residues: Acetyl-CoA carboxylase, mitochondrial (2273 aa).

The transit peptide at 1 to 104 (KGKTITHGQS…RGNIHKHTRL (104 aa)) directs the protein to the mitochondrion. In terms of domain architecture, Biotin carboxylation spans 134-635 (VISKILIANN…STGWLDDLIL (502 aa)). Positions 292 to 484 (KTNFVSVPDD…LPATQLQIAM (193 aa)) constitute an ATP-grasp domain. Residue 332 to 337 (GGGGKG) participates in ATP binding. Arg459 is an active-site residue. A Biotinyl-binding domain is found at 763-837 (LEAELNPTQV…EAGDVIAKLT (75 aa)). Lys804 bears the N6-biotinyllysine mark. A CoA carboxyltransferase N-terminal domain is found at 1532–1867 (PYSVKDWLQP…KRDMSPPLLE (336 aa)). The segment at 1532–2187 (PYSVKDWLQP…EGQVIKRLQK (656 aa)) is carboxyltransferase. The CoA site is built by Arg1776, Lys2080, and Arg2082. Positions 1871–2187 (RWDRDVDFKP…EGQVIKRLQK (317 aa)) constitute a CoA carboxyltransferase C-terminal domain.

Biotin serves as cofactor.

Its subcellular location is the mitochondrion. It carries out the reaction hydrogencarbonate + acetyl-CoA + ATP = malonyl-CoA + ADP + phosphate + H(+). The enzyme catalyses N(6)-biotinyl-L-lysyl-[protein] + hydrogencarbonate + ATP = N(6)-carboxybiotinyl-L-lysyl-[protein] + ADP + phosphate + H(+). It functions in the pathway lipid metabolism; malonyl-CoA biosynthesis; malonyl-CoA from acetyl-CoA: step 1/1. In terms of biological role, catalyzes the rate-limiting reaction in the mitochondrial fatty acid synthesis (FAS) type II pathway. Responsible for the production of the mitochondrial malonyl-CoA, used for the biosynthesis of the cofactor lipoic acid. This protein carries three functions: biotin carboxyl carrier protein, biotin carboxylase, and carboxyltransferase. This Saccharomyces cerevisiae (strain Lalvin EC1118 / Prise de mousse) (Baker's yeast) protein is Acetyl-CoA carboxylase, mitochondrial (HFA1).